We begin with the raw amino-acid sequence, 258 residues long: Imidazole glycerol phosphate synthase subunit HisF (258 aa).

Catalysis depends on residues aspartate 11 and aspartate 130.

This sequence belongs to the HisA/HisF family. In terms of assembly, heterodimer of HisH and HisF.

The protein localises to the cytoplasm. The enzyme catalyses 5-[(5-phospho-1-deoxy-D-ribulos-1-ylimino)methylamino]-1-(5-phospho-beta-D-ribosyl)imidazole-4-carboxamide + L-glutamine = D-erythro-1-(imidazol-4-yl)glycerol 3-phosphate + 5-amino-1-(5-phospho-beta-D-ribosyl)imidazole-4-carboxamide + L-glutamate + H(+). Its pathway is amino-acid biosynthesis; L-histidine biosynthesis; L-histidine from 5-phospho-alpha-D-ribose 1-diphosphate: step 5/9. In terms of biological role, IGPS catalyzes the conversion of PRFAR and glutamine to IGP, AICAR and glutamate. The HisF subunit catalyzes the cyclization activity that produces IGP and AICAR from PRFAR using the ammonia provided by the HisH subunit. This is Imidazole glycerol phosphate synthase subunit HisF from Roseiflexus sp. (strain RS-1).